The chain runs to 306 residues: MSKTAASSAVDASQAGTVKVGDMVVNRMGFGAMRVTGDGIWDEPKDKEACIATLKRLPELNINFIDTADSYGPEVSENLLREALYPYKGLIIATKGGLVRTGPNEWHPCGAPKFLRQEVLMSMRRLGVKQIDLWQLHRIDPKVPRKDQFSEIAAMKKEGLIRHVGLSEVTVDDIKEAEQYFPVVSVQNLFNLVNRKNEKVLEYCEQKGIAFIPWYPLASGALAKPGTILDAVSKDLDRSTSQIALSWVLQRSPVMLPIPGTSKVDHLEENVKAAGIQLSSEVFAKLDEEGKSEDAKRQEEEKKKSS.

The tract at residues 287-306 is disordered; the sequence is DEEGKSEDAKRQEEEKKKSS.

This sequence belongs to the aldo/keto reductase family.

Its subcellular location is the cytoplasm. The protein localises to the nucleus. This is an uncharacterized protein from Schizosaccharomyces pombe (strain 972 / ATCC 24843) (Fission yeast).